Reading from the N-terminus, the 550-residue chain is Arginine--tRNA ligase (550 aa).

The 'HIGH' region signature appears at 130 to 140; sequence ANPTGPIHIGG.

The protein belongs to the class-I aminoacyl-tRNA synthetase family. As to quaternary structure, monomer.

Its subcellular location is the cytoplasm. It carries out the reaction tRNA(Arg) + L-arginine + ATP = L-arginyl-tRNA(Arg) + AMP + diphosphate. The sequence is that of Arginine--tRNA ligase from Mycolicibacterium gilvum (strain PYR-GCK) (Mycobacterium gilvum (strain PYR-GCK)).